A 204-amino-acid polypeptide reads, in one-letter code: Proteasome subunit beta type-3-A (204 aa).

The protein belongs to the peptidase T1B family. In terms of assembly, component of the 20S core complex of the 26S proteasome. The 26S proteasome is composed of a core protease (CP), known as the 20S proteasome, capped at one or both ends by the 19S regulatory particle (RP/PA700). The 20S proteasome core is composed of 28 subunits that are arranged in four stacked rings, resulting in a barrel-shaped structure. The two end rings are each formed by seven alpha subunits, and the two central rings are each formed by seven beta subunits. The catalytic chamber with the active sites is on the inside of the barrel.

The protein localises to the cytoplasm. It localises to the nucleus. Functionally, non-catalytic component of the proteasome, a multicatalytic proteinase complex which is characterized by its ability to cleave peptides with Arg, Phe, Tyr, Leu, and Glu adjacent to the leaving group at neutral or slightly basic pH. The proteasome has an ATP-dependent proteolytic activity. The chain is Proteasome subunit beta type-3-A (PBC1) from Arabidopsis thaliana (Mouse-ear cress).